The chain runs to 376 residues: 23S rRNA (uracil(747)-C(5))-methyltransferase RlmC (376 aa).

[4Fe-4S] cluster-binding residues include Cys3, Cys11, Cys14, and Cys87. Gln212, Phe241, Glu262, and Asn307 together coordinate S-adenosyl-L-methionine. Cys334 (nucleophile) is an active-site residue.

The protein belongs to the class I-like SAM-binding methyltransferase superfamily. RNA M5U methyltransferase family. RlmC subfamily.

It carries out the reaction uridine(747) in 23S rRNA + S-adenosyl-L-methionine = 5-methyluridine(747) in 23S rRNA + S-adenosyl-L-homocysteine + H(+). Functionally, catalyzes the formation of 5-methyl-uridine at position 747 (m5U747) in 23S rRNA. The chain is 23S rRNA (uracil(747)-C(5))-methyltransferase RlmC from Yersinia pestis bv. Antiqua (strain Antiqua).